Consider the following 441-residue polypeptide: MMMMRGGERVKEFLRPFVDSRTWDLCVIWKLGDDPSRFIEWVGCCCSGCYIDKNIKLENSEEGGTGRKKKASFCRDDHNKHRIRTLACEALSRFPLFMPLYPGIHGEVVMSKSPKWLVNSGSKMEMFSTRVLVPVSDGLVELFAFDMRPFDESMVHLIMSRCTTFFEPFPEQRLQFRIIPRAEESMSSGVNLSVEGGGSSSVSNPSSETQNLFGNYPNASCVEILREEQTPCLIMNKEKDVVVQNANDSKANKKLLPTENFKSKNLHSERKRRERINQAMYGLRAVVPKITKLNKIGIFSDAVDYINELLVEKQKLEDELKGINEMECKEIAAEEQSAIADPEAERVSSKSNKRVKKNEVKIEVHETGERDFLIRVVQEHKQDGFKRLIEAVDLCELEIIDVNFTRLDLTVMTVLNVKANKDGIACGILRDLLLKMMITSI.

In terms of domain architecture, bHLH spans 260-309 (NFKSKNLHSERKRRERINQAMYGLRAVVPKITKLNKIGIFSDAVDYINEL).

In terms of assembly, homodimer. As to expression, expressed constitutively in roots, leaves, stems, and flowers.

It localises to the nucleus. The chain is Transcription factor bHLH90 (BHLH90) from Arabidopsis thaliana (Mouse-ear cress).